Reading from the N-terminus, the 390-residue chain is Galactokinase (390 aa).

34-37 (EHTD) is a substrate binding site. ATP is bound by residues Ser-68 and 122-128 (GSGLSSS). Residues Ser-128 and Glu-160 each contribute to the Mg(2+) site. Catalysis depends on Asp-172, which acts as the Proton acceptor. Substrate is bound at residue Tyr-221.

Belongs to the GHMP kinase family. GalK subfamily.

The protein resides in the cytoplasm. The catalysed reaction is alpha-D-galactose + ATP = alpha-D-galactose 1-phosphate + ADP + H(+). It functions in the pathway carbohydrate metabolism; galactose metabolism. Functionally, catalyzes the transfer of the gamma-phosphate of ATP to D-galactose to form alpha-D-galactose-1-phosphate (Gal-1-P). This is Galactokinase from Chloroflexus aurantiacus (strain ATCC 29366 / DSM 635 / J-10-fl).